The primary structure comprises 527 residues: Protein PLASTID TRANSCRIPTIONALLY ACTIVE 12, chloroplastic (527 aa).

Residues 1–30 (MASISTTTWLYRGQVCTDSGKSSNCIVQRR) constitute a chloroplast transit peptide. Residues 1-115 (MASISTTTWL…ASIPGEDYWP (115 aa)) are PHYA-interacting region 1 (PIR1). Residues 89-188 (SYMDSTSGKL…NDSSDGFVTY (100 aa)) are disordered. A compositionally biased stretch (acidic residues) spans 163 to 181 (TNDEVSDSEDSSEEEENDS). 2 short sequence motifs (nuclear localization signal) span residues 204 to 211 (DKKLGRPH) and 235 to 242 (WRKPEKEQ). Positions 252-352 (DVETVFLKAM…EMFSHQTDRE (101 aa)) are PHYA-interacting region 2 (PIR2). Acidic residues predominate over residues 458–471 (GENDDDEDDADVEK). The interval 458 to 527 (GENDDDEDDA…LMDFEEETDP (70 aa)) is disordered. Over residues 485–504 (ETPELRTAKPKPKKEGRMSL) the composition is skewed to basic and acidic residues. The span at 506 to 527 (EAVDDAENLTDFLMDFEEETDP) shows a compositional bias: acidic residues. Positions 512-520 (ENLTDFLMD) match the Required and sufficient for transcriptional transactivation activity and to trigger PIF proteins degradation motif.

Component of the transcriptionally active chromosome (TAC) complexes. Interacts with PTAC14 and PTAC7. Binds directly to PTAC6/PAP8 in the nucleus. Interacts with MED14. Binds to SL1/MTERF3. Binds to photoactivated phytochromes (e.g. PHYA and PHYB) via their photosensory domains; these interactions stimulate its light-mediated accumulation. Associates, via its N-terminal region, with phytochrome-interacting factors (PIFs) including PIF1, PIF3, PIF4, PIF5, PIF6, BHLH72/PIF7, UNE10/PIF8 and PIL1. Binds to RAD4. Associates with MRL7/RCB. As to expression, mostly expressed in cotyledons, leaves, stems and flowers, but barely in roots.

The protein localises to the plastid. It is found in the chloroplast. The protein resides in the nucleus. Functionally, involved in plastid gene expression. Acidic transcriptional coactivator necessary for the transactivation of many PIFs target genes (class B genes), particularly during the regulation of hypocotyl growth. Plays dual opposite roles in regulating hypocotyl growth, preventing it in red and far-red conditions, but promoting it otherwise. Required in the nucleus for the initiation of photomorphogenesis mediated by phytochromes (PHYs) (e.g. PHYA and PHYB) by mediating PHYs localization to photobodies, especially in response to red and far-red light, and implicating phytochrome nuclear bodies as sites of proteolysis for PHYs and PIFs proteins (e.g. PIF1 and PIF3). Acts downstream of PHYs and upstream of DET1. Involved in UV tolerance in both roots and hypocotyls, specifically in dark conditions. Element of a PIF4/HMR/MED14-dependent thermoresponsive process; acts as a PIF4 transcriptional coactivator to trigger the thermoresponsive growth-relevant genes (e.g. mainly involved in biosynthesis and signaling of the phytohormone auxin) and promote warm-temperature-dependent (e.g. 27 degrees Celsius) PIF4 and MED14 stabilization and accumulation, being more prominently involved in long days (LD) and continuous red light (Rc) than in short days (SD), thus modulating warm temperature elicitation of MED14-dependent thermomorphogenesis (e.g. hypocotyl elongation). This is Protein PLASTID TRANSCRIPTIONALLY ACTIVE 12, chloroplastic from Arabidopsis thaliana (Mouse-ear cress).